We begin with the raw amino-acid sequence, 198 residues long: tRNA (pseudouridine(54)-N(1))-methyltransferase (198 aa).

S-adenosyl-L-methionine is bound at residue L128.

Belongs to the methyltransferase superfamily. TrmY family. Homodimer.

The protein localises to the cytoplasm. It catalyses the reaction pseudouridine(54) in tRNA + S-adenosyl-L-methionine = N(1)-methylpseudouridine(54) in tRNA + S-adenosyl-L-homocysteine + H(+). Its function is as follows. Specifically catalyzes the N1-methylation of pseudouridine at position 54 (Psi54) in tRNAs. The protein is tRNA (pseudouridine(54)-N(1))-methyltransferase of Haloferax volcanii (strain ATCC 29605 / DSM 3757 / JCM 8879 / NBRC 14742 / NCIMB 2012 / VKM B-1768 / DS2) (Halobacterium volcanii).